A 126-amino-acid chain; its full sequence is Glycine cleavage system H protein (126 aa).

The 83-residue stretch at 22–104 (VAYVGITDYA…YGEGWLIKMK (83 aa)) folds into the Lipoyl-binding domain. N6-lipoyllysine is present on lysine 63.

The protein belongs to the GcvH family. As to quaternary structure, the glycine cleavage system is composed of four proteins: P, T, L and H. Requires (R)-lipoate as cofactor.

The glycine cleavage system catalyzes the degradation of glycine. The H protein shuttles the methylamine group of glycine from the P protein to the T protein. This chain is Glycine cleavage system H protein, found in Bacteroides fragilis (strain YCH46).